The sequence spans 523 residues: Asparagine--tRNA ligase (523 aa).

Residues 329–350 are disordered; it reads SARGDTPLAARSTARTPPVRTP.

It belongs to the class-II aminoacyl-tRNA synthetase family. Homodimer.

It is found in the cytoplasm. It catalyses the reaction tRNA(Asn) + L-asparagine + ATP = L-asparaginyl-tRNA(Asn) + AMP + diphosphate + H(+). The polypeptide is Asparagine--tRNA ligase (Treponema pallidum (strain Nichols)).